The chain runs to 1070 residues: Envelopment polyprotein (1070 aa).

The signal sequence occupies residues 1–17 (MMFSRVMQLALICAVTC). Topologically, residues 18–457 (EDNPCLWERF…SNPQCYPYGK (440 aa)) are lumenal. Cystine bridges form between C22–C55, C152–C165, C211–C221, C267–C309, C296–C301, C353–C356, C360–C429, and C380–C385. An N-linked (GlcNAc...) asparagine; by host glycan is attached at N269. Residues 458-478 (WFLLFLILATLYIIVALLKTI) form a helical membrane-spanning segment. At 479 to 536 (MRIFMACLSVLYGPFIIIIKISRCLGRLGKRKGERTYVRLMEALDDERKPEVVRAPVS) the chain is on the cytoplasmic side. The tract at residues 480–522 (RIFMACLSVLYGPFIIIIKISRCLGRLGKRKGERTYVRLMEAL) is golgi retention signal. The internal signal sequence for glycoprotein C stretch occupies residues 541–560 (KQPRIVLFIVLALLVHMALC). Positions 550–560 (VLALLVHMALC) are excised as a propeptide. The Lumenal segment spans residues 550-1023 (VLALLVHMAL…NWLDTLFGAS (474 aa)). 10 disulfide bridges follow: C561/C602, C574/C584, C642/C831, C648/C696, C654/C703, C659/C685, C689/C694, C799/C813, C896/C966, and C906/C909. The tract at residues 648–654 (CRWAGSC) is fusion loop. The segment at 690 to 701 (GGAACGCFNAAP) is fusion loop. The helical transmembrane segment at 1024-1044 (LLGKILGIGLAILSPFILILI) threads the bilayer. Residues 1045–1070 (LRWILRVVLRRSRIRREPKYEMAKYS) are Cytoplasmic-facing.

This sequence belongs to the phlebovirus envelope glycoprotein family. As to quaternary structure, heterodimer with glycoprotein C. In terms of assembly, heterodimer with glycoprotein N. Homotrimer (postfusion). Post-translationally, specific enzymatic cleavages in vivo yield mature proteins Glycoprotein C, and Glycoprotein N. Glycosylated. In terms of processing, palmitoylated.

It is found in the virion membrane. The protein localises to the host Golgi apparatus membrane. The protein resides in the host endoplasmic reticulum membrane. Structural component of the virion that interacts with glycoprotein C. It shields the hydrophobic fusion loops of the glycoprotein C, preventing premature fusion. The glycoprotein protrusions are arranged on an icosahedral lattice, with T=12 triangulation. They are able to attach the virion to the host cell receptor CD209/DC-SIGN and to promote fusion of membranes with the late endosome after endocytosis of the virion. Plays a role in the packaging of ribonucleoproteins during virus assembly. Its function is as follows. Structural component of the virion that interacts with glycoprotein N. Acts as a class II fusion protein that is activated upon acidification and subsequent repositioning of the glycoprotein N. The glycoprotein protrusions are arranged on an icosahedral lattice, with T=12 triangulation. They are able to attach the virion to the host cell receptor CD209/DC-SIGN and to promote fusion of membranes with the late endosome after endocytosis of the virion. This is Envelopment polyprotein (GP) from Amblyomma variegatum (Tropical bont tick).